A 596-amino-acid polypeptide reads, in one-letter code: Dihydroxy-acid dehydratase pbrD, mitochondrial (596 aa).

Residues 1–18 (MATSSIRSRALGLSRRAR) constitute a mitochondrion transit peptide. [2Fe-2S] cluster is bound at residue cysteine 84. Residue aspartate 116 participates in Mg(2+) binding. Cysteine 157 is a binding site for [2Fe-2S] cluster. Residue aspartate 158 participates in Mg(2+) binding. Position 230 (cysteine 230) interacts with [2Fe-2S] cluster. Glutamate 483 contacts Mg(2+). Serine 509 (proton acceptor) is an active-site residue.

It belongs to the IlvD/Edd family. It depends on [2Fe-2S] cluster as a cofactor. Mg(2+) serves as cofactor.

The protein localises to the mitochondrion. The enzyme catalyses (2R)-2,3-dihydroxy-3-methylbutanoate = 3-methyl-2-oxobutanoate + H2O. The catalysed reaction is (2R,3R)-2,3-dihydroxy-3-methylpentanoate = (S)-3-methyl-2-oxopentanoate + H2O. It participates in amino-acid biosynthesis; L-isoleucine biosynthesis; L-isoleucine from 2-oxobutanoate: step 3/4. The protein operates within amino-acid biosynthesis; L-valine biosynthesis; L-valine from pyruvate: step 3/4. DHAD activity is not inhibited by the dihydroxyacid dehydratase inhibitor aspterric acid (AA). Its function is as follows. Dihydroxyacid dehydratase; part of the gene cluster that mediates the biosynthesis of the sesquiterpenoid aspterric acid (AA), an inhibitor of dihydroxy-acid dehydratase (DHAD) effective as an herbicide. Performs the third step in the common pathway leading to biosynthesis of branched-chain amino acids. Catalyzes the dehydration of (2R,3R)-2,3-dihydroxy-3-methylpentanoate (2,3-dihydroxy-3-methylvalerate) into 2-oxo-3-methylpentanoate (2-oxo-3-methylvalerate) and of (2R)-2,3-dihydroxy-3-methylbutanoate (2,3-dihydroxyisovalerate) into 2-oxo-3-methylbutanoate (2-oxoisovalerate), the penultimate precursor to L-isoleucine and L-valine, respectively. PbrD confers self-resistance in the presence of the dihydroxyacid dehydratase inhibitor aspterric acid (AA) produced by the ast cluster. The protein is Dihydroxy-acid dehydratase pbrD, mitochondrial of Penicillium brasilianum.